Reading from the N-terminus, the 537-residue chain is Lysosomal cobalamin transport escort protein LMBD1 (537 aa).

Residues 1–7 (MAAAAAE) are Extracellular-facing. The helical transmembrane segment at 8 to 28 (LVIGWCIFGLLLLAILAFCWV) threads the bilayer. The Cytoplasmic portion of the chain corresponds to 29–47 (YVRKYQSQRESEVVSTVTA). The chain crosses the membrane as a helical span at residues 48–68 (IFSLAVALITSALLPVDIFLV). The Extracellular portion of the chain corresponds to 69–97 (SYMKNQNGTFKDWADANVTVQIENTVLYG). 2 N-linked (GlcNAc...) asparagine glycosylation sites follow: N75 and N85. A helical membrane pass occupies residues 98–118 (YYTLYSVILFCVFFWIPFVYF). The Cytoplasmic portion of the chain corresponds to 119–141 (YYEEKDEDDASKCTQIKTALKYT). Residues 142 to 162 (LGFVVICALLLLVGAFVPLHL) form a helical membrane-spanning segment. The Extracellular segment spans residues 163–185 (PNNNNSTEWEKVKLLFEDLGTGQ). N-linked (GlcNAc...) asparagine glycans are attached at residues N166 and N167. Residues 186-206 (GLAALSFSISSLTLIGMLAAI) traverse the membrane as a helical segment. Over 207–302 (TYTAYGMSAL…KFCGALRPLK (96 aa)) the chain is Cytoplasmic. A YERL motif; mediates interaction with adapter protein complex 2 and is essential for its function in clathrin-mediated endocytosis of INSR motif is present at residues 229-232 (YERL). T235 carries the post-translational modification Phosphothreonine. The short motif at 291-294 (WTKF) is the WTKF motif; mediates interaction with adapter protein complex 2 and is essential for its function in clathrin-mediated endocytosis of INSR element. A helical transmembrane segment spans residues 303–323 (IIWGIFFILVALLFVISLFLS). Topologically, residues 324–361 (NLDKALHSAGIDSGFIIFGTNLSNPLNMLLPLLQTVFP) are extracellular. N-linked (GlcNAc...) asparagine glycosylation is present at N344. Residues 362-382 (LDYILITIIIMYFIFTSMAGI) form a helical membrane-spanning segment. The Cytoplasmic segment spans residues 383-405 (RNIGIWFFWIRLYKIRRGRTRPQ). The helical transmembrane segment at 406–426 (ALLFLCMILLLIVLHTSYMIY) threads the bilayer. Topologically, residues 427–483 (SLAPQYVMYGSQNYLIESNITSDAHKGNSTLAVPKRCDADAPKDQCTVTRTYIFLHK) are extracellular. N-linked (GlcNAc...) asparagine glycans are attached at residues N445 and N454. The chain crosses the membrane as a helical span at residues 484–504 (FWFFSAAYYFGNWAFLVVFLI). Residues 505-537 (GLIVSCCKGKKSVIEGVDEDSDLSDDEPSAYSA) are Cytoplasmic-facing. Phosphoserine is present on residues S525 and S528.

Belongs to the LIMR family. LMBRD1 subfamily. In terms of assembly, interacts with ABCD4; this interaction induces the translocation of ABCD4 from the endoplasmic reticulum to the lysosome. Interacts with ABCD4 and MMACHC; this interaction ensures the transport of cobalamin from the lysosome to the cytoplasm. Interacts with INSR, adapter protein complex 2 and clathrin heavy chain. N-glycosylated.

The protein resides in the endoplasmic reticulum membrane. The protein localises to the lysosome membrane. Its subcellular location is the cell membrane. It is found in the cytoplasmic vesicle. It localises to the clathrin-coated vesicle. Functionally, lysosomal membrane chaperone required to export cobalamin (vitamin B12) from the lysosome to the cytosol, allowing its conversion to cofactors. Targets ABCD4 transporter from the endoplasmic reticulum to the lysosome. Then forms a complex with lysosomal ABCD4 and cytoplasmic MMACHC to transport cobalamin across the lysosomal membrane. Acts as an adapter protein which plays an important role in mediating and regulating the internalization of the insulin receptor (INSR). Involved in clathrin-mediated endocytosis of INSR via its interaction with adapter protein complex 2. Essential for the initiation of gastrulation and early formation of mesoderm structures during embryogenesis. The protein is Lysosomal cobalamin transport escort protein LMBD1 of Mus musculus (Mouse).